Consider the following 447-residue polypeptide: C4-dicarboxylate transport protein (447 aa).

8 helical membrane passes run 22 to 42, 52 to 72, 90 to 110, 159 to 179, 199 to 219, 232 to 252, 325 to 347, and 366 to 386; these read FQVI…PLVG, FINL…VTGI, AYFL…AHVV, GNIL…ASVG, LVHI…AFTI, WLVG…LGVV, LFIA…LLVA, and AATL…ILGV.

Belongs to the dicarboxylate/amino acid:cation symporter (DAACS) (TC 2.A.23) family.

It is found in the cell inner membrane. In terms of biological role, responsible for the transport of dicarboxylates such as succinate, fumarate, and malate from the periplasm across the membrane. The chain is C4-dicarboxylate transport protein from Stenotrophomonas maltophilia (strain R551-3).